Here is a 56-residue protein sequence, read N- to C-terminus: Meucin-25 (56 aa).

An N-terminal signal peptide occupies residues 1-31 (MFRIEYSLVQLLLRNVTIPLLLIIQMHIMSS).

Belongs to the non-disulfide-bridged peptide (NDBP) superfamily. Antimalarial peptide (group 5) family. Expressed by the venom gland.

Its subcellular location is the secreted. This synthetic cationic peptide inhibits the development of Plasmodium berghei ookinetes, kills intraerythrocytic P.falciparum, and is cytotoxic to the Drosophila S2 cell at micromolar concentrations. No antibacterial, antifungal and hemolytic activities have been found at micromolar concentrations. This Mesobuthus eupeus (Lesser Asian scorpion) protein is Meucin-25.